A 272-amino-acid polypeptide reads, in one-letter code: tRNA (guanine-N(7)-)-methyltransferase (272 aa).

Over residues 1-20 (MSTDSESKRRAYREEKEGAR) the composition is skewed to basic and acidic residues. Residues 1–43 (MSTDSESKRRAYREEKEGARKKSVKLAPEATPESKPDLPRKRY) are disordered. Residues glycine 89, 112–113 (EI), 148–149 (NA), and cysteine 168 each bind S-adenosyl-L-methionine. Residue aspartate 171 is part of the active site. S-adenosyl-L-methionine is bound at residue 246-248 (TEE).

Belongs to the class I-like SAM-binding methyltransferase superfamily. TrmB family. As to quaternary structure, forms a complex with TRM82.

It is found in the nucleus. It carries out the reaction guanosine(46) in tRNA + S-adenosyl-L-methionine = N(7)-methylguanosine(46) in tRNA + S-adenosyl-L-homocysteine. It participates in tRNA modification; N(7)-methylguanine-tRNA biosynthesis. Functionally, catalyzes the formation of N(7)-methylguanine at position 46 (m7G46) in tRNA. The polypeptide is tRNA (guanine-N(7)-)-methyltransferase (Meyerozyma guilliermondii (strain ATCC 6260 / CBS 566 / DSM 6381 / JCM 1539 / NBRC 10279 / NRRL Y-324) (Yeast)).